A 274-amino-acid polypeptide reads, in one-letter code: tRNA dimethylallyltransferase (274 aa).

The tract at residues 9-12 (DSLS) is interaction with substrate tRNA.

It belongs to the IPP transferase family. As to quaternary structure, monomer. Mg(2+) is required as a cofactor.

It carries out the reaction adenosine(37) in tRNA + dimethylallyl diphosphate = N(6)-dimethylallyladenosine(37) in tRNA + diphosphate. Its function is as follows. Catalyzes the transfer of a dimethylallyl group onto the adenine at position 37 in tRNAs that read codons beginning with uridine, leading to the formation of N6-(dimethylallyl)adenosine (i(6)A). The polypeptide is tRNA dimethylallyltransferase (miaA) (Helicobacter pylori (strain P12)).